A 1069-amino-acid polypeptide reads, in one-letter code: Rab GTPase-activating protein 1 (1069 aa).

The tract at residues 1 to 79 (MDDKASVGKI…DPPMDDQPGE (79 aa)) is disordered. Positions 7 to 22 (VGKISVSSDSVSTLNS) are enriched in low complexity. Ser42 carries the phosphoserine modification. The PID domain maps to 142 to 298 (EDSVVFSKLT…IFTFSVSLEI (157 aa)). Position 360 is a phosphoserine (Ser360). The tract at residues 482-527 (ERERRKTTASPSVRLPQSGSQSSVIPSPPEDDEEEDNDEPLLSGSG) is disordered. Positions 489-506 (TASPSVRLPQSGSQSSVI) are enriched in polar residues. Residues 510–520 (PEDDEEEDNDE) are compositionally biased toward acidic residues. The region spanning 566 to 752 (GVPEALRGEV…HIIDLLLCEG (187 aa)) is the Rab-GAP TBC domain. The stretch at 798 to 1047 (KKLMELACNM…ALNEVQAAKK (250 aa)) forms a coiled coil. A Phosphothreonine modification is found at Thr996.

As to quaternary structure, interacts with RAB6A and tubulin gamma.

The protein localises to the cytoplasm. Its subcellular location is the cytosol. The protein resides in the cytoskeleton. It is found in the microtubule organizing center. It localises to the centrosome. Functionally, may act as a GTPase-activating protein of RAB6A. May play a role in microtubule nucleation by centrosome. May participate in a RAB6A-mediated pathway involved in the metaphase-anaphase transition. This is Rab GTPase-activating protein 1 from Pongo abelii (Sumatran orangutan).